A 671-amino-acid polypeptide reads, in one-letter code: Preterminal protein (671 aa).

Positions 380 to 389 match the Nuclear localization signal motif; that stretch reads RLPVRRRRRR. The segment at 386–409 is disordered; the sequence is RRRRVPPPPPPPEEEEEGEALMEE. The segment covering 397–409 has biased composition (acidic residues); the sequence is PEEEEEGEALMEE. O-(5'-phospho-DNA)-serine is present on S580. A disordered region spans residues 645 to 671; it reads GADVPLPPLPAGPEPPLPPGARPRHRF. Over residues 649–665 the composition is skewed to pro residues; the sequence is PLPPLPAGPEPPLPPGA.

It belongs to the adenoviridae terminal protein family. As to quaternary structure, heterodimer with the polymerase; this heterodimer binds to bp 9 to 18 of the genome. Interacts with host POU2F1; POU2F1 binds to the auxiliary sequences in the inverted terminal repeats and tethers the pTP-POL heterodimer to the origin DNA thereby participating in the assembly of the pre-initiation complex (POL-TP-DBP-NFIA-POU2F1). In terms of processing, preterminal protein is used to replicate viral genome, upon genomic encapsidation it is processed first into iTP and finally into TP by adenovirus protease.

The protein resides in the host nucleus matrix. Its function is as follows. Protein covalently bound to the viral DNA that acts as a primer for viral genomic replication by DNA strand displacement. Assembles on the viral origin of replication in an initiation complex with viral polymerase, DBP, host NFIA and host POU2F1/OCT1. During initiation, the polymerase covalently couples the first dCTP with Ser-580 of pTP. The terminal protein stimulates the template activity over 20 fold compared to protein-free templates. Neo-synthesized viral genomes are linked to two preterminal proteins, one for each 5' end. These new genomes are encapsidated in the nucleus, and during capsid maturation by viral protease, preterminal protein is first cleaved into intermediary (iTP), then into mature TP. May play a role in host nuclear matrix localization of genomic DNA. In Homo sapiens (Human), this protein is Preterminal protein.